The sequence spans 1058 residues: MPKRTDIQKIMVIGSGPIIIGQAAEFDYAGTQACLSLKEEGYEVVLVNSNPATIMTDKEIADKVYIEPITLEFVTRILRKERPDALLPTLGGQTGLNMAMELSKNGILDELSVELLGTKLSAIDQAEDRDLFKQLMEELEQPIPESEIVNTVEEAVAFAATIGYPVIVRPAFTLGGTGGGMCANEKELREITENGLKLSPVTQCLIERSIAGFKEIEYEVMRDSADNALVVCNMENFDPVGIHTGDSIVFAPAQTMSDYENQMLRDASLSIIRALKIEGGCNVQLALDPNSFKYYVIEVNPRVSRSSALASKATGYPIAKLAAKIAVGLTLDEVINPVTGSTYAMFEPALDYVVAKIPRFPFDKFEKGERRLGTQMKATGEVMAIGRNIEESLLKACRSLEIGVHHNEIPELAAVSDDALIEKVVKAQDDRLFYVSEAIRRGYTPEEIAELTKIDIFYLDKLLHIFEIEQELGAHPQDLEVLKTAKLNGFSDRKIAELWGTTDDKVRQLRLENKIVPVYKMVDTCAAEFDSETPYFYSTYGWENESIRSDKESVLVLGSGPIRIGQGVEFDYATVHSVKAIQAAGYEAIIMNSNPETVSTDFSVSDKLYFEPLTFEDVMNVIDLEQPKGVIVQFGGQTAINLAEPLAKAGVTILGTQVADLDRAEDRDLFEQALKELDIPQPPGQTATNEEEAALAARKIGFPVLVRPSYVLGGRAMEIVENEEDLRSYMRTAVKASPDHPVLVDSYIVGQECEVDAISDGKDVLIPGIMEHIERAGVHSGDSMAVYPPQTLSQKVQETIADYTKRLAIGLHCLGMMNIQFVIKDEKVYVIEVNPRASRTVPFLSKVTNIPMAQVATKLILGQSLSELGYQNGLYPESTRVHIKAPVFSFTKLAKVDSLLGPEMKSTGEVMGSDATLEKALYKAFEASYLHLPTFGNVVFTIADDAKEEALNLARRFQNIGYGILATEGTAAFFASHGLQAQPVGKIGDDDKDIPSFVRKGRIQAIINTVGTKRTADEDGEQIRRSAIEHGVPLFTALDTANAMLKVLESRSFVTEAI.

The tract at residues 1–401 (MPKRTDIQKI…SLLKACRSLE (401 aa)) is carboxyphosphate synthetic domain. The ATP site is built by Arg129, Arg169, Gly175, Gly176, Arg208, Ile210, Glu215, Gly241, Ile242, His243, Gln284, and Glu298. One can recognise an ATP-grasp 1 domain in the interval 133–327 (KQLMEELEQP…IAKLAAKIAV (195 aa)). 3 residues coordinate Mg(2+): Gln284, Glu298, and Asn300. The Mn(2+) site is built by Gln284, Glu298, and Asn300. The interval 402–546 (IGVHHNEIPE…YSTYGWENES (145 aa)) is oligomerization domain. Positions 547–929 (IRSDKESVLV…ALYKAFEASY (383 aa)) are carbamoyl phosphate synthetic domain. The ATP-grasp 2 domain maps to 671 to 861 (EQALKELDIP…MAQVATKLIL (191 aa)). Arg707, Ser746, Ile748, Glu752, Gly777, Val778, His779, Ser780, Gln820, and Glu832 together coordinate ATP. Mg(2+) contacts are provided by Gln820, Glu832, and Asn834. Mn(2+) is bound by residues Gln820, Glu832, and Asn834. Residues 930 to 1058 (LHLPTFGNVV…ESRSFVTEAI (129 aa)) form the MGS-like domain. An allosteric domain region spans residues 930–1058 (LHLPTFGNVV…ESRSFVTEAI (129 aa)).

Belongs to the CarB family. In terms of assembly, composed of two chains; the small (or glutamine) chain promotes the hydrolysis of glutamine to ammonia, which is used by the large (or ammonia) chain to synthesize carbamoyl phosphate. Tetramer of heterodimers (alpha,beta)4. Mg(2+) serves as cofactor. Mn(2+) is required as a cofactor.

It carries out the reaction hydrogencarbonate + L-glutamine + 2 ATP + H2O = carbamoyl phosphate + L-glutamate + 2 ADP + phosphate + 2 H(+). It catalyses the reaction hydrogencarbonate + NH4(+) + 2 ATP = carbamoyl phosphate + 2 ADP + phosphate + 2 H(+). The protein operates within amino-acid biosynthesis; L-arginine biosynthesis; carbamoyl phosphate from bicarbonate: step 1/1. It functions in the pathway pyrimidine metabolism; UMP biosynthesis via de novo pathway; (S)-dihydroorotate from bicarbonate: step 1/3. Large subunit of the glutamine-dependent carbamoyl phosphate synthetase (CPSase). CPSase catalyzes the formation of carbamoyl phosphate from the ammonia moiety of glutamine, carbonate, and phosphate donated by ATP, constituting the first step of 2 biosynthetic pathways, one leading to arginine and/or urea and the other to pyrimidine nucleotides. The large subunit (synthetase) binds the substrates ammonia (free or transferred from glutamine from the small subunit), hydrogencarbonate and ATP and carries out an ATP-coupled ligase reaction, activating hydrogencarbonate by forming carboxy phosphate which reacts with ammonia to form carbamoyl phosphate. In Streptococcus pneumoniae (strain P1031), this protein is Carbamoyl phosphate synthase large chain.